The chain runs to 353 residues: Nuclear hormone receptor family member nhr-27 (353 aa).

Residues 24–102 constitute a DNA-binding region (nuclear receptor); that stretch reads VSNCVVCGRL…KGMLDLSRYT (79 aa). 2 consecutive NR C4-type zinc fingers follow at residues 27–47 and 64–85; these read CVVCGRLTSLFNYGAHSCSAC and CKYSGNCFENFKRAIHFECKFC. The NR LBD domain maps to 119-351; sequence ETLFLTMTVS…SQVHQDVIEF (233 aa). The AF-2 stretch occupies residues 340 to 351; sequence QPSQVHQDVIEF.

It belongs to the nuclear hormone receptor family.

It is found in the nucleus. Functionally, ligand-activated transcription factor. Involved in lifespan extension in a manner dependent upon mitochondrial function. The protein is Nuclear hormone receptor family member nhr-27 of Caenorhabditis elegans.